We begin with the raw amino-acid sequence, 211 residues long: tRNA (guanine-N(7)-)-methyltransferase (211 aa).

4 residues coordinate S-adenosyl-L-methionine: glutamate 44, aspartate 69, aspartate 96, and aspartate 118. The active site involves aspartate 118. Lysine 122 provides a ligand contact to substrate. An interaction with RNA region spans residues 124–129 (KHEKRR). Substrate-binding positions include aspartate 154 and 191–194 (TEYE).

It belongs to the class I-like SAM-binding methyltransferase superfamily. TrmB family.

The enzyme catalyses guanosine(46) in tRNA + S-adenosyl-L-methionine = N(7)-methylguanosine(46) in tRNA + S-adenosyl-L-homocysteine. Its pathway is tRNA modification; N(7)-methylguanine-tRNA biosynthesis. Functionally, catalyzes the formation of N(7)-methylguanine at position 46 (m7G46) in tRNA. This chain is tRNA (guanine-N(7)-)-methyltransferase, found in Streptococcus pyogenes serotype M12 (strain MGAS2096).